A 102-amino-acid chain; its full sequence is Small ribosomal subunit protein uS10 (102 aa).

Belongs to the universal ribosomal protein uS10 family. As to quaternary structure, part of the 30S ribosomal subunit.

Involved in the binding of tRNA to the ribosomes. This is Small ribosomal subunit protein uS10 from Pelotomaculum thermopropionicum (strain DSM 13744 / JCM 10971 / SI).